The following is a 1202-amino-acid chain: MNFEGLDPGLAEYAPAMHSALDPVLDAHLNPSLLQNVELDPEGVALEALPVQESVHIMEGVYSELHSVVAEVGVPVSVSHFDLHEEMLWVGSHGGHATSFFGPALERYSSFQVNGSDDIRQIQSLENGILFLTKNNLKYMARGGLIIFDYLLDENEDMHSLLLTDSSTLLVGGLQNHIIEIDLNTVQETQKYAVETPGVTIMRQTNRFFFCGHTSGKVSLRDLRTFKVEHEFDAFSGSLSDFDVHGNLLAACGFSSRLTGLACDRFLKVYDLRMMRAITPLQVHVDPAFLRFIPTYTSRLAIISQSGQCQFCEPTGLANPADIFHVNPVGPLLMTFDVSASKQALAFGDSEGCVHLWTDSPEPSFNPYSRETEFALPCLVDSLPPLDWSQDLLPLSLIPVPLTTDTLLSDWPAANSAPAPRRAPPVDAEILRTMKKVGFIGYAPNPRTRLRNQIPYRLKESDSEFDSFSQVTESPVGREEEPHLHMVSKKYRKVTIKYSKLGLEDFDFKHYNKTLFAGLEPHIPNAYCNCMIQVLYFLEPVRCLIQNHLCQKEFCLACELGFLFHMLDLSRGDPCQGNNFLRAFRTIPEASALGLILADSDEASGKGNLARLIQRWNRFILTQLHQDMQELEIPQAYRGAGGSSFCSSGDSVIGQLFSCEMENCSLCRCGSETVRASSTLLFTLSYPDGSKSDKTGKNYDFAQVLKRSICLDQNTQAWCDTCEKYQPTIQTRNIRHLPDILVINCEVNSSKEADFWRMQAEVAFKMAVKKHGGEISKNKEFALADWKELGSPEGVLVCPSIEELKNVWLPFSIRMKMTKNKGLDVCNWTDGDEMQWGPARAEEEHGVYVYDLMATVVHILDSRTGGSLVAHIKVGETYHQRKEGVTHQQWYLFNDFLIEPIDKHEAVQFDMNWKVPAILYYVKRNLNSRYNLNIKNPIEASVLLAEASLARKQRKTHTTFIPLMLNEMPQIGDLVGLDAEFVTLNEEEAELRSDGTKSTIKPSQMSVARITCVRGQGPNEGIPFIDDYISTQEQVVDYLTQYSGIKPGDLDAKISSKHLTTLKSTYLKLRFLIDIGVKFVGHGLQKDFRVINLMVPKDQVLDTVYLFHMPRKRMISLRFLAWYFLDLKIQGETHDSIEDARTALQLYRKYLELSKNGTEPESFHKVLKGLYEKGRKMDWKVPEPEGQTSPKNAAVFSSVLAL.

WD repeat units follow at residues 153–193 (DENE…QKYA), 195–231 (ETPG…VEHE), 244–280 (VHGN…AITP), and 328–367 (PVGP…SFNP). Residues 368-485 (YSRETEFALP…VGREEEPHLH (118 aa)) are linker. The USP domain occupies 486-924 (MVSKKYRKVT…VPAILYYVKR (439 aa)). Ser-791 carries the phosphoserine modification. The Exonuclease domain occupies 975 to 1147 (VGLDAEFVTL…EDARTALQLY (173 aa)). The a divalent metal cation site is built by Asp-978, Glu-980, Asp-1087, and Asp-1139. A Phosphoserine modification is found at Ser-1189.

The protein belongs to the peptidase C19 family. PAN2 subfamily. In terms of assembly, forms a heterotrimer with an asymmetric homodimer of the regulatory subunit PAN3 to form the poly(A)-nuclease (PAN) deadenylation complex. Interacts with PAN3 isoform 1/Pan3L and isoform 3/Pan3S. Interacts with ZFP36. It depends on a divalent metal cation as a cofactor.

It is found in the cytoplasm. Its subcellular location is the P-body. The protein localises to the nucleus. The enzyme catalyses Exonucleolytic cleavage of poly(A) to 5'-AMP.. With respect to regulation, positively regulated by the regulatory subunit PAN3. Catalytic subunit of the poly(A)-nuclease (PAN) deadenylation complex, one of two cytoplasmic mRNA deadenylases involved in general and miRNA-mediated mRNA turnover. PAN specifically shortens poly(A) tails of RNA and the activity is stimulated by poly(A)-binding protein (PABP). PAN deadenylation is followed by rapid degradation of the shortened mRNA tails by the CCR4-NOT complex. Deadenylated mRNAs are then degraded by two alternative mechanisms, namely exosome-mediated 3'-5' exonucleolytic degradation, or deadenylation-dependent mRNA decaping and subsequent 5'-3' exonucleolytic degradation by XRN1. Also acts as an important regulator of the HIF1A-mediated hypoxic response. Required for HIF1A mRNA stability independent of poly(A) tail length regulation. The chain is PAN2-PAN3 deadenylation complex catalytic subunit PAN2 from Homo sapiens (Human).